Reading from the N-terminus, the 608-residue chain is DNA ligase (608 aa).

An ATP-binding site is contributed by glutamate 266. The active-site N6-AMP-lysine intermediate is the lysine 268. Residues arginine 273, arginine 288, glutamate 318, phenylalanine 358, arginine 435, and lysine 441 each coordinate ATP.

Belongs to the ATP-dependent DNA ligase family. It depends on Mg(2+) as a cofactor. The cofactor is Mn(2+).

The catalysed reaction is ATP + (deoxyribonucleotide)n-3'-hydroxyl + 5'-phospho-(deoxyribonucleotide)m = (deoxyribonucleotide)n+m + AMP + diphosphate.. It carries out the reaction ADP + (deoxyribonucleotide)n-3'-hydroxyl + 5'-phospho-(deoxyribonucleotide)m = (deoxyribonucleotide)n+m + AMP + phosphate.. It catalyses the reaction GTP + (deoxyribonucleotide)n-3'-hydroxyl + 5'-phospho-(deoxyribonucleotide)m = (deoxyribonucleotide)n+m + GMP + diphosphate.. In terms of biological role, DNA ligase that seals nicks in double-stranded DNA during DNA replication, DNA recombination and DNA repair. Can use ATP, ADP and GTP, but not CTP, TTP or NAD(+). In Hyperthermus butylicus (strain DSM 5456 / JCM 9403 / PLM1-5), this protein is DNA ligase.